Consider the following 436-residue polypeptide: D-aminoacyl-tRNA deacylase (436 aa).

The protein belongs to the DtdA deacylase family. In terms of assembly, monomer. Zn(2+) is required as a cofactor.

The catalysed reaction is a D-aminoacyl-tRNA + H2O = a tRNA + a D-alpha-amino acid + H(+). It carries out the reaction glycyl-tRNA(Ala) + H2O = tRNA(Ala) + glycine + H(+). In terms of biological role, D-aminoacyl-tRNA deacylase with broad substrate specificity. By recycling D-aminoacyl-tRNA to D-amino acids and free tRNA molecules, this enzyme counteracts the toxicity associated with the formation of D-aminoacyl-tRNA entities in vivo. The chain is D-aminoacyl-tRNA deacylase from Methanoregula boonei (strain DSM 21154 / JCM 14090 / 6A8).